Here is a 330-residue protein sequence, read N- to C-terminus: DNA-directed RNA polymerase subunit alpha (330 aa).

The alpha N-terminal domain (alpha-NTD) stretch occupies residues 1 to 232 (MAILAFQKPD…YHFMLFSDEK (232 aa)). An alpha C-terminal domain (alpha-CTD) region spans residues 248–330 (EEVLHMRQLL…DISKYKLDKE (83 aa)).

It belongs to the RNA polymerase alpha chain family. In terms of assembly, homodimer. The RNAP catalytic core consists of 2 alpha, 1 beta, 1 beta' and 1 omega subunit. When a sigma factor is associated with the core the holoenzyme is formed, which can initiate transcription.

The enzyme catalyses RNA(n) + a ribonucleoside 5'-triphosphate = RNA(n+1) + diphosphate. In terms of biological role, DNA-dependent RNA polymerase catalyzes the transcription of DNA into RNA using the four ribonucleoside triphosphates as substrates. The polypeptide is DNA-directed RNA polymerase subunit alpha (Bacteroides thetaiotaomicron (strain ATCC 29148 / DSM 2079 / JCM 5827 / CCUG 10774 / NCTC 10582 / VPI-5482 / E50)).